A 298-amino-acid chain; its full sequence is Small ribosomal subunit protein uS2 (298 aa).

Composition is skewed to basic and acidic residues over residues 237–259 (QSKELDDKADEKAAKVSHSDGQK) and 280–298 (PKSEKQDNVDAAKLPENKG). The interval 237–298 (QSKELDDKAD…DAAKLPENKG (62 aa)) is disordered.

Belongs to the universal ribosomal protein uS2 family.

This chain is Small ribosomal subunit protein uS2, found in Neorickettsia sennetsu (strain ATCC VR-367 / Miyayama) (Ehrlichia sennetsu).